The sequence spans 42 residues: Packaging protein P20 (42 aa).

Residues 11–31 (INWLIVILMLTIAGMAATLVC) traverse the membrane as a helical segment.

As to quaternary structure, heterodimer of P20 and P22; further multimerizes as hexamers of heterodimers. Part of the dodecameric portal complex that is composed of the packaging efficiency factor P6, the DNA packaging ATPase P9, and the internal heterododecamer P20/P22 which spans the virion inner membrane.

Its subcellular location is the virion membrane. Functionally, together with P22, forms the internal part of the portal complex embeded in the virion internal membrane and which plays critical roles in genome packaging and genome ejection. Both proteins multimerize as a single ring-shaped heterdodecamer arranged around a central channel and interact with the P6/P9 external part of the portal. This Acinetobacter calcoaceticus (Arthrobacter siderocapsulatus) protein is Packaging protein P20 (XX).